Consider the following 254-residue polypeptide: Methyl-CpG-binding domain-containing protein 11 (254 aa).

In terms of domain architecture, MBD spans 4 to 74 (EEEVVSVELP…AEFDWTTSGT (71 aa)). Residues 56-254 (KSHPGNPAIA…EKTAEGEATG (199 aa)) are disordered. Basic and acidic residues-rich tracts occupy residues 80-97 (RISEKTKATPSPDKEPPK), 107-130 (SKKDAEGEKSEGGGEENSHVKDTE), 151-162 (ETERVNDAKENI), and 178-254 (ESMK…EATG). S116 carries the phosphoserine modification.

In terms of tissue distribution, expressed in leaves (around hydathodes), buds, flowers (carpels and pollen grains), stems (around nodes), siliques, mature seeds and roots.

The protein localises to the nucleus. Its function is as follows. Transcriptional regulator that binds DNA independently of its methylation status. Required during plant organogenesis and development. This Arabidopsis thaliana (Mouse-ear cress) protein is Methyl-CpG-binding domain-containing protein 11 (MBD11).